A 359-amino-acid polypeptide reads, in one-letter code: Nicotinate-nucleotide--dimethylbenzimidazole phosphoribosyltransferase (359 aa).

Glu-318 serves as the catalytic Proton acceptor.

The protein belongs to the CobT family. In terms of assembly, homodimer.

The enzyme catalyses 5,6-dimethylbenzimidazole + nicotinate beta-D-ribonucleotide = alpha-ribazole 5'-phosphate + nicotinate + H(+). It participates in nucleoside biosynthesis; alpha-ribazole biosynthesis; alpha-ribazole from 5,6-dimethylbenzimidazole: step 1/2. Functionally, catalyzes the synthesis of alpha-ribazole-5'-phosphate from nicotinate mononucleotide (NAMN) and 5,6-dimethylbenzimidazole (DMB). The chain is Nicotinate-nucleotide--dimethylbenzimidazole phosphoribosyltransferase from Escherichia coli (strain UTI89 / UPEC).